The primary structure comprises 86 residues: Insulin (86 aa).

Disulfide bonds link Cys7-Cys72, Cys19-Cys85, and Cys71-Cys76. Residues 33 to 63 constitute a propeptide, c peptide; that stretch reads ELEDPQVGQADPGVVPEAGRLQPLALEMTLQ.

The protein belongs to the insulin family. In terms of assembly, heterodimer of a B chain and an A chain linked by two disulfide bonds.

It is found in the secreted. Functionally, insulin decreases blood glucose concentration. It increases cell permeability to monosaccharides, amino acids and fatty acids. It accelerates glycolysis, the pentose phosphate cycle, and glycogen synthesis in liver. This chain is Insulin (INS), found in Chinchilla chinchilla (Short-tailed chinchilla).